The sequence spans 108 residues: Tubulin-specific chaperone A (108 aa).

N-acetylalanine is present on Ala-2.

Belongs to the TBCA family. As to quaternary structure, supercomplex made of cofactors A to E. Cofactors A and D function by capturing and stabilizing tubulin in a quasi-native conformation. Cofactor E binds to the cofactor D-tubulin complex; interaction with cofactor C then causes the release of tubulin polypeptides that are committed to the native state.

It localises to the cytoplasm. It is found in the cytoskeleton. In terms of biological role, tubulin-folding protein; involved in the early step of the tubulin folding pathway. This is Tubulin-specific chaperone A (TBCA) from Oryctolagus cuniculus (Rabbit).